The chain runs to 402 residues: Baeyer-Villiger oxidase notM (402 aa).

Belongs to the questin oxidase family.

Its function is as follows. Baeyer-Villiger oxidase; part of the gene cluster that mediates the biosynthesis of notoamide, a fungal indole alkaloid that belongs to a family of natural products containing a characteristic bicyclo[2.2.2]diazaoctane core. The first step of notoamide biosynthesis involves coupling of L-proline and L-tryptophan by the bimodular NRPS notE, to produce cyclo-L-tryptophan-L-proline called brevianamide F. The reverse prenyltransferase notF then acts as a deoxybrevianamide E synthase and converts brevianamide F to deoxybrevianamide E via reverse prenylation at C-2 of the indole ring leading to the bicyclo[2.2.2]diazaoctane core. Deoxybrevianamide E is further hydroxylated at C-6 of the indole ring, likely catalyzed by the cytochrome P450 monooxygenase notG, to yield 6-hydroxy-deoxybrevianamide E. 6-hydroxy-deoxybrevianamide E is a specific substrate of the prenyltransferase notC for normal prenylation at C-7 to produce 6-hydroxy-7-prenyl-deoxybrevianamide, also called notoamide S. As the proposed pivotal branching point in notoamide biosynthesis, notoamide S can be diverted to notoamide E through an oxidative pyran ring closure putatively catalyzed by either notH cytochrome P450 monooxygenase or the notD FAD-linked oxidoreductase. This step would be followed by an indole 2,3-epoxidation-initiated pinacol-like rearrangement catalyzed by the notB FAD-dependent monooxygenase leading to the formation of notoamide C and notoamide D. On the other hand notoamide S is converted to notoamide T by notH (or notD), a bifunctional oxidase that also functions as the intramolecular Diels-Alderase responsible for generation of (+)-notoamide T. To generate antipodal (-)-notoaminide T, notH' (or notD') in Aspergillus versicolor is expected to catalyze a Diels-Alder reaction leading to the opposite stereochemistry. The remaining oxidoreductase notD (or notH) likely catalyzes the oxidative pyran ring formation to yield (+)-stephacidin A. The FAD-dependent monooxygenase notI is highly similar to notB and is predicted to catalyze a similar conversion from (+)-stephacidin A to (-)-notoamide B via the 2,3-epoxidation of (+)-stephacidin A followed by a pinacol-type rearrangement. Finally, it remains unclear which enzyme could be responsible for the final hydroxylation steps leading to notoamide A and sclerotiamide. The function of notM in the notoamide biosynthesis has not been determined yet. The polypeptide is Baeyer-Villiger oxidase notM (Aspergillus sp. (strain MF297-2)).